We begin with the raw amino-acid sequence, 344 residues long: Dihydroorotase (344 aa).

Zn(2+) contacts are provided by H14 and H16. Substrate is bound by residues 16 to 18 (HLR) and N42. Zn(2+) is bound by residues K100, H137, and H175. K100 carries the post-translational modification N6-carboxylysine. H137 provides a ligand contact to substrate. A substrate-binding site is contributed by L220. D248 is a binding site for Zn(2+). Residue D248 is part of the active site. 2 residues coordinate substrate: H252 and A264.

This sequence belongs to the metallo-dependent hydrolases superfamily. DHOase family. Class II DHOase subfamily. In terms of assembly, homodimer. Zn(2+) is required as a cofactor.

The enzyme catalyses (S)-dihydroorotate + H2O = N-carbamoyl-L-aspartate + H(+). It functions in the pathway pyrimidine metabolism; UMP biosynthesis via de novo pathway; (S)-dihydroorotate from bicarbonate: step 3/3. Its function is as follows. Catalyzes the reversible cyclization of carbamoyl aspartate to dihydroorotate. This is Dihydroorotase from Cupriavidus pinatubonensis (strain JMP 134 / LMG 1197) (Cupriavidus necator (strain JMP 134)).